The primary structure comprises 124 residues: Phosphoribosyl-AMP cyclohydrolase (124 aa).

Residue D82 participates in Mg(2+) binding. Zn(2+) is bound at residue C83. Mg(2+) contacts are provided by D84 and D86. The Zn(2+) site is built by C99 and C106.

The protein belongs to the PRA-CH family. In terms of assembly, homodimer. Mg(2+) serves as cofactor. Requires Zn(2+) as cofactor.

The protein localises to the cytoplasm. It carries out the reaction 1-(5-phospho-beta-D-ribosyl)-5'-AMP + H2O = 1-(5-phospho-beta-D-ribosyl)-5-[(5-phospho-beta-D-ribosylamino)methylideneamino]imidazole-4-carboxamide. It functions in the pathway amino-acid biosynthesis; L-histidine biosynthesis; L-histidine from 5-phospho-alpha-D-ribose 1-diphosphate: step 3/9. In terms of biological role, catalyzes the hydrolysis of the adenine ring of phosphoribosyl-AMP. The chain is Phosphoribosyl-AMP cyclohydrolase from Zymomonas mobilis subsp. mobilis (strain ATCC 31821 / ZM4 / CP4).